The sequence spans 210 residues: ATP-dependent Clp protease proteolytic subunit (210 aa).

The active-site Nucleophile is the Ser-106. His-131 is an active-site residue.

This sequence belongs to the peptidase S14 family. In terms of assembly, fourteen ClpP subunits assemble into 2 heptameric rings which stack back to back to give a disk-like structure with a central cavity, resembling the structure of eukaryotic proteasomes.

The protein resides in the cytoplasm. It catalyses the reaction Hydrolysis of proteins to small peptides in the presence of ATP and magnesium. alpha-casein is the usual test substrate. In the absence of ATP, only oligopeptides shorter than five residues are hydrolyzed (such as succinyl-Leu-Tyr-|-NHMec, and Leu-Tyr-Leu-|-Tyr-Trp, in which cleavage of the -Tyr-|-Leu- and -Tyr-|-Trp bonds also occurs).. Its function is as follows. Cleaves peptides in various proteins in a process that requires ATP hydrolysis. Has a chymotrypsin-like activity. Plays a major role in the degradation of misfolded proteins. In Afipia carboxidovorans (strain ATCC 49405 / DSM 1227 / KCTC 32145 / OM5) (Oligotropha carboxidovorans), this protein is ATP-dependent Clp protease proteolytic subunit.